The chain runs to 148 residues: MKALIILGLVLLSVMVQAKVFERCELARTLKRLGMDGYRGISLANWMCLAKWESGYNTRATNYNPGDRSTDYGIFQINSRYWCNDGKTPGAVNACHLSCNALLQDNIADAVACAKRVVRDPQGIRAWVAWRNRCQNRDLRQYIQGCGV.

Positions 1–18 are cleaved as a signal peptide; the sequence is MKALIILGLVLLSVMVQA. The C-type lysozyme domain occupies 19–148; that stretch reads KVFERCELAR…LRQYIQGCGV (130 aa). Disulfide bonds link Cys24-Cys146, Cys48-Cys134, Cys83-Cys99, and Cys95-Cys113. Active-site residues include Glu53 and Asp71.

The protein belongs to the glycosyl hydrolase 22 family. As to quaternary structure, monomer.

It is found in the secreted. The catalysed reaction is Hydrolysis of (1-&gt;4)-beta-linkages between N-acetylmuramic acid and N-acetyl-D-glucosamine residues in a peptidoglycan and between N-acetyl-D-glucosamine residues in chitodextrins.. In terms of biological role, lysozymes have primarily a bacteriolytic function; those in tissues and body fluids are associated with the monocyte-macrophage system and enhance the activity of immunoagents. This chain is Lysozyme C (LYZ), found in Hylobates lar (Lar gibbon).